We begin with the raw amino-acid sequence, 274 residues long: Orotidine 5'-phosphate decarboxylase (274 aa).

Lys95 (proton donor) is an active-site residue.

This sequence belongs to the OMP decarboxylase family. Type 2 subfamily.

It catalyses the reaction orotidine 5'-phosphate + H(+) = UMP + CO2. It functions in the pathway pyrimidine metabolism; UMP biosynthesis via de novo pathway; UMP from orotate: step 2/2. The sequence is that of Orotidine 5'-phosphate decarboxylase from Mycobacterium avium (strain 104).